We begin with the raw amino-acid sequence, 319 residues long: Ribose-phosphate pyrophosphokinase (319 aa).

Residues 41 to 43 and 100 to 101 each bind ATP; these read NGE and RQ. Mg(2+) is bound by residues H134 and D175. Residue K198 is part of the active site. Residues R200, D224, and 228–232 each bind D-ribose 5-phosphate; that span reads DTAGS.

The protein belongs to the ribose-phosphate pyrophosphokinase family. Class I subfamily. As to quaternary structure, homohexamer. It depends on Mg(2+) as a cofactor.

Its subcellular location is the cytoplasm. The enzyme catalyses D-ribose 5-phosphate + ATP = 5-phospho-alpha-D-ribose 1-diphosphate + AMP + H(+). Its pathway is metabolic intermediate biosynthesis; 5-phospho-alpha-D-ribose 1-diphosphate biosynthesis; 5-phospho-alpha-D-ribose 1-diphosphate from D-ribose 5-phosphate (route I): step 1/1. Its function is as follows. Involved in the biosynthesis of the central metabolite phospho-alpha-D-ribosyl-1-pyrophosphate (PRPP) via the transfer of pyrophosphoryl group from ATP to 1-hydroxyl of ribose-5-phosphate (Rib-5-P). The polypeptide is Ribose-phosphate pyrophosphokinase (Clostridium acetobutylicum (strain ATCC 824 / DSM 792 / JCM 1419 / IAM 19013 / LMG 5710 / NBRC 13948 / NRRL B-527 / VKM B-1787 / 2291 / W)).